Consider the following 831-residue polypeptide: Periplasmic nitrate reductase (831 aa).

Residues 1-31 (MKLSRRDFMKANAAVAAAAAAGLTIPTVAKA) constitute a signal peptide (tat-type signal). The 57-residue stretch at 40–96 (IKWDKAPCRFCGTGCGVLVGTQNGRIVASQGDPDSPVNRGLNCVKGYFLPKIMYGKD) folds into the 4Fe-4S Mo/W bis-MGD-type domain. Residues cysteine 47, cysteine 50, cysteine 54, and cysteine 82 each contribute to the [4Fe-4S] cluster site. Mo-bis(molybdopterin guanine dinucleotide) contacts are provided by residues lysine 84, glutamine 151, asparagine 176, cysteine 180, 213–220 (WGSNMAEM), 244–248 (STFEH), 263–265 (QTD), methionine 373, glutamine 377, asparagine 483, 509–510 (SD), lysine 532, aspartate 559, and 719–728 (TGRVLEHWHT). Position 795 (phenylalanine 795) interacts with substrate. Asparagine 803 and lysine 820 together coordinate Mo-bis(molybdopterin guanine dinucleotide).

Belongs to the prokaryotic molybdopterin-containing oxidoreductase family. NasA/NapA/NarB subfamily. In terms of assembly, component of the periplasmic nitrate reductase NapAB complex composed of NapA and NapB. [4Fe-4S] cluster is required as a cofactor. Mo-bis(molybdopterin guanine dinucleotide) serves as cofactor. Post-translationally, predicted to be exported by the Tat system. The position of the signal peptide cleavage has not been experimentally proven.

The protein resides in the periplasm. It catalyses the reaction 2 Fe(II)-[cytochrome] + nitrate + 2 H(+) = 2 Fe(III)-[cytochrome] + nitrite + H2O. Functionally, catalytic subunit of the periplasmic nitrate reductase complex NapAB. Receives electrons from NapB and catalyzes the reduction of nitrate to nitrite. The sequence is that of Periplasmic nitrate reductase from Yersinia enterocolitica serotype O:8 / biotype 1B (strain NCTC 13174 / 8081).